The following is a 778-amino-acid chain: Kin of IRRE-like protein 3 (778 aa).

The N-terminal stretch at Met1–Gly21 is a signal peptide. At Leu22–Ala535 the chain is on the extracellular side. Ig-like C2-type domains follow at residues Tyr48–Thr142, Pro147–Thr243, Pro249–Asp330, Pro335–Thr415, and Pro419–Lys515. A disulfide bond links Cys69 and Cys127. Residue Asn167 is glycosylated (N-linked (GlcNAc...) asparagine). Cys170 and Cys227 are oxidised to a cystine. Asn253 carries N-linked (GlcNAc...) asparagine glycosylation. Cys271 and Cys314 form a disulfide bridge. N-linked (GlcNAc...) asparagine glycosylation occurs at Asn324. 2 disulfides stabilise this stretch: Cys356/Cys398 and Cys440/Cys499. Asn498 carries an N-linked (GlcNAc...) asparagine glycan. Residues Val536–Val556 form a helical membrane-spanning segment. The Cytoplasmic segment spans residues Ala557–Val778. Residues Cys727 to Lys736 show a composition bias toward polar residues. The interval Cys727–Val778 is disordered. Positions Lys748–Gln762 are enriched in low complexity.

Belongs to the immunoglobulin superfamily. In terms of assembly, homodimer; mediates homophilic interactions to promote cell adhesion. Interacts with NPHS1; forms heterodimers with NPHS1. Interacts with NPHS2/podocin (via the C-terminus). Interacts with CASK. Interacts (via extracellular region) with MAP1B. Interacts (via extracellular region) with MYO16. Interacts (via intracellular region) with ATP1B1. Interacts (via intracellular region) with SHMT2. Interacts (via intracellular region) with UFC1. Post-translationally, undergoes proteolysis by a metalloprotease and gives rise to a soluble form. Expressed mainly in adult brain, bone marrow and stromal cells. Expressed in diverse regions of the brain, including the cortex, hippocampus, striatum, olfactory bulb and cerebellum. In brain, expressed in pontine nucleus neurons (at protein level). In hippocampus, produced in both the dentate granule neurons and the GABAergic neurons, but not the CA3 neurons. Expressed in subpopulations of vomeronasal sensory neurons. Expressed in a subset of neurons in dorsal root ganglia.

The protein localises to the cell membrane. It localises to the cell projection. The protein resides in the axon. It is found in the dendrite. Its subcellular location is the secreted. In terms of biological role, synaptic adhesion molecule required for the formation of target-specific synapses. Required for formation of target-specific synapses at hippocampal mossy fiber synapses. Required for formation of mossy fiber filopodia, the synaptic structures connecting dentate granule and GABA neurons. Probably acts as a homophilic adhesion molecule that promotes trans-cellular interactions and stabilize mossy fiber filipodia contact and subsequent synapse formation. Required for the coalescence of vomeronasal sensory neuron axons. May be involved in the hematopoietic supportive capacity of stroma cells; the secreted extracellular domain is directly responsible for supporting hematopoietic stem cells. In Mus musculus (Mouse), this protein is Kin of IRRE-like protein 3 (Kirrel3).